The sequence spans 195 residues: Nucleoside triphosphate pyrophosphatase (195 aa).

Asp-70 functions as the Proton acceptor in the catalytic mechanism.

The protein belongs to the Maf family. It depends on a divalent metal cation as a cofactor.

The protein resides in the cytoplasm. The catalysed reaction is a ribonucleoside 5'-triphosphate + H2O = a ribonucleoside 5'-phosphate + diphosphate + H(+). It catalyses the reaction a 2'-deoxyribonucleoside 5'-triphosphate + H2O = a 2'-deoxyribonucleoside 5'-phosphate + diphosphate + H(+). Nucleoside triphosphate pyrophosphatase. May have a dual role in cell division arrest and in preventing the incorporation of modified nucleotides into cellular nucleic acids. The protein is Nucleoside triphosphate pyrophosphatase of Synechocystis sp. (strain ATCC 27184 / PCC 6803 / Kazusa).